The primary structure comprises 666 residues: tRNA 5-methylaminomethyl-2-thiouridine biosynthesis bifunctional protein MnmC (666 aa).

Residues methionine 1–glutamate 245 form a tRNA (mnm(5)s(2)U34)-methyltransferase region. The interval isoleucine 270 to lysine 666 is FAD-dependent cmnm(5)s(2)U34 oxidoreductase.

It in the N-terminal section; belongs to the methyltransferase superfamily. tRNA (mnm(5)s(2)U34)-methyltransferase family. This sequence in the C-terminal section; belongs to the DAO family. It depends on FAD as a cofactor.

Its subcellular location is the cytoplasm. The catalysed reaction is 5-aminomethyl-2-thiouridine(34) in tRNA + S-adenosyl-L-methionine = 5-methylaminomethyl-2-thiouridine(34) in tRNA + S-adenosyl-L-homocysteine + H(+). In terms of biological role, catalyzes the last two steps in the biosynthesis of 5-methylaminomethyl-2-thiouridine (mnm(5)s(2)U) at the wobble position (U34) in tRNA. Catalyzes the FAD-dependent demodification of cmnm(5)s(2)U34 to nm(5)s(2)U34, followed by the transfer of a methyl group from S-adenosyl-L-methionine to nm(5)s(2)U34, to form mnm(5)s(2)U34. The sequence is that of tRNA 5-methylaminomethyl-2-thiouridine biosynthesis bifunctional protein MnmC from Salmonella typhi.